Consider the following 415-residue polypeptide: Phakinin (415 aa).

The segment at 1 to 26 (MSTRRVVVDAPAGASSSMPLQRHKAS) is disordered. At Ser2 the chain carries N-acetylserine. Positions 2 to 114 (STRRVVVDAP…LGAVEDLGGC (113 aa)) are head. A phosphoserine mark is found at Ser26, Ser32, and Ser35. Thr53 is modified (phosphothreonine). Phosphoserine occurs at positions 90 and 100. Residues 104–415 (DLGAVEDLGG…HALLDREESS (312 aa)) enclose the IF rod domain. Coiled-coil stretches lie at residues 115–144 (LVEY…ESKA), 199–248 (RKAA…VKML), and 295–395 (QAKQ…LSHK). Positions 396–415 (CQLQRDVASYHALLDREESS) are tail.

This sequence belongs to the intermediate filament family. In terms of assembly, part of a complex required for lens intermediate filament formation composed of BFSP1, BFSP2 and CRYAA. Found in a complex composed of PPL (via C-terminal linker domain), BFSP1 and BFSP2 in the retinal lens. Within the complex interacts with PPL (via C-terminal linker domain) and with BFSP1. Identified in a complex that contains VIM, EZR, AHNAK, BFSP1, BFSP2, ANK2, PLEC, PRX and spectrin. Interacts with LGSN. Interacts with VIM. As to expression, abundantly expressed in both the inner and outer cortex of the retina, expressed at a lower level in the nucleus of the retina (at protein level). Detected in eye lens fiber cells (at protein level).

The protein localises to the cell membrane. It localises to the cytoplasm. It is found in the cytoskeleton. The protein resides in the cell cortex. Its function is as follows. Required for the correct formation of lens intermediate filaments as part of a complex composed of BFSP1, BFSP2 and CRYAA. Plays a role in maintenance of retinal lens optical clarity. This chain is Phakinin (BFSP2), found in Bos taurus (Bovine).